A 175-amino-acid polypeptide reads, in one-letter code: CDP-archaeol synthase (175 aa).

Transmembrane regions (helical) follow at residues 41–61 (GLFS…WLSM), 78–98 (YASA…GDMF), 122–142 (FVVG…VSNF), and 150–170 (VLIM…FIGV).

It belongs to the CDP-archaeol synthase family. The cofactor is Mg(2+).

It localises to the cell membrane. It catalyses the reaction 2,3-bis-O-(geranylgeranyl)-sn-glycerol 1-phosphate + CTP + H(+) = CDP-2,3-bis-O-(geranylgeranyl)-sn-glycerol + diphosphate. It functions in the pathway membrane lipid metabolism; glycerophospholipid metabolism. Catalyzes the formation of CDP-2,3-bis-(O-geranylgeranyl)-sn-glycerol (CDP-archaeol) from 2,3-bis-(O-geranylgeranyl)-sn-glycerol 1-phosphate (DGGGP) and CTP. This reaction is the third ether-bond-formation step in the biosynthesis of archaeal membrane lipids. The polypeptide is CDP-archaeol synthase (Methanosarcina acetivorans (strain ATCC 35395 / DSM 2834 / JCM 12185 / C2A)).